Here is a 92-residue protein sequence, read N- to C-terminus: Small ribosomal subunit protein uS19 (92 aa).

It belongs to the universal ribosomal protein uS19 family.

Protein S19 forms a complex with S13 that binds strongly to the 16S ribosomal RNA. This is Small ribosomal subunit protein uS19 from Geobacillus sp. (strain WCH70).